The chain runs to 390 residues: Multidrug resistance protein MdtL (390 aa).

The next 12 membrane-spanning stretches (helical) occupy residues 4-24 (FLICSFALVLLYPAGIDMYLV), 42-62 (IAFSVYLAGMATAMLFAGKVA), 69-89 (PVAIAGAVIFIIASMLCSRAT), 93-113 (LFLTGRFIQGIGAGCCYVVAF), 131-151 (LLNGITCIVPVLAPVLGHLIM), 158-178 (SLFYTMIAMGIAVCLLSVFIL), 199-221 (LLNRFFLSRLAITTLSVSVILTF), 245-265 (ALTAGISMAVSFSTPFALSVF), 269-289 (TLMLTSQGLFLAAGIVLSLSS), 293-313 (VTLFGLTLICAGFSVGFGVAM), 316-336 (ALGPFSLRAGVASSVLGIAQV), and 353-375 (ALNMLIGILIGCSMVCILLLMTI).

This sequence belongs to the major facilitator superfamily. DHA1 family. MdtL (TC 2.A.1.2.22) subfamily.

The protein localises to the cell inner membrane. The chain is Multidrug resistance protein MdtL from Citrobacter koseri (strain ATCC BAA-895 / CDC 4225-83 / SGSC4696).